Consider the following 204-residue polypeptide: COBRA-like protein 5 (204 aa).

The signal sequence occupies residues 1–24 (MESLFSTMIVLLLVSFSCLISTEA). Residues Asn-31 and Asn-195 are each glycosylated (N-linked (GlcNAc...) asparagine).

Belongs to the COBRA family. In terms of tissue distribution, expressed in roots, stems, leaves, flowers and siliques.

This is COBRA-like protein 5 (COBL5) from Arabidopsis thaliana (Mouse-ear cress).